Consider the following 227-residue polypeptide: Claudin-15 (227 aa).

A topological domain (cytoplasmic) is located at residue Met1. Residues 2–24 (SVAVETFGFFMSALGLLMLGLTL) form a helical membrane-spanning segment. Residues 25 to 74 (SNSYWRVSTVHGNVITTNTIFENLWYSCATDSLGVSNCWDFPSMLALSGY) lie on the Extracellular side of the membrane. The cysteines at positions 52 and 62 are disulfide-linked. Residues 75–99 (VQGCRALMITAILLGFLGLFLGMVG) form a helical membrane-spanning segment. Residues 100 to 115 (LRCTNVGNMDLSKKAK) are Cytoplasmic-facing. A Phosphoserine modification is found at Ser111. A helical membrane pass occupies residues 116–140 (LLAIAGTLHILAGACGMVAISWYAV). Residues 141–159 (NITTDFFNPLYAGTKYELG) are Extracellular-facing. Residues 146–147 (FF) form an important for the formation of tight-junction strand-like structures region. Residues 160-182 (PALYLGWSASLLSILGGICVFST) traverse the membrane as a helical segment. Over 183–227 (CCCSSKEEPATRAGLPYKPSTVVIPRATSDESDISFGKYGKNAYV) the chain is Cytoplasmic. Phosphoserine occurs at positions 211, 214, and 217.

The protein belongs to the claudin family. Can form homo- and heteropolymeric tight junction strands. In terms of processing, palmitoylated when heterogeneously expressed in S.frugiperda cells. As to expression, detected in duodenum, jejunum and ileum. Detected on intestinal villi and crypts (at protein level). Ubiquitous. Detected in small and large intestine, colon, jejunum, heart, kidney and lung.

The protein localises to the cell junction. Its subcellular location is the tight junction. It is found in the cell membrane. The enzyme catalyses Na(+)(in) = Na(+)(out). It carries out the reaction K(+)(in) = K(+)(out). The catalysed reaction is Cs(+)(in) = Cs(+)(out). It catalyses the reaction Rb(+)(in) = Rb(+)(out). The enzyme catalyses Li(+)(in) = Li(+)(out). It carries out the reaction NH4(+)(in) = NH4(+)(out). The catalysed reaction is methylamine(out) = methylamine(in). It catalyses the reaction H2O(in) = H2O(out). Forms paracellular channels: polymerizes in tight junction strands with cation- and water-selective channels through the strands, conveying epithelial permeability in a process known as paracellular tight junction permeability. In intestinal epithelium, allows for sodium and water fluxes from the peritoneal side to the lumen of the intestine to regulate nutrient absorption and intestinal morphogenesis. This is Claudin-15 from Mus musculus (Mouse).